The following is a 355-amino-acid chain: Sorbitol dehydrogenase (355 aa).

Alanine 2 bears the N-acetylalanine mark. Cysteine 43 serves as a coordination point for Zn(2+). Tyrosine 49 provides a ligand contact to substrate. Positions 68 and 69 each coordinate Zn(2+). Position 154 (glutamate 154) interacts with substrate. NAD(+)-binding positions include isoleucine 182, aspartate 202, arginine 207, 271 to 273, and 295 to 297; these read VGL and IFR. Positions 297 and 298 each coordinate substrate.

Belongs to the zinc-containing alcohol dehydrogenase family. In terms of assembly, homotetramer. Requires Zn(2+) as cofactor. In terms of tissue distribution, expressed in liver.

The protein resides in the mitochondrion membrane. It localises to the cell projection. It is found in the cilium. The protein localises to the flagellum. The enzyme catalyses keto-D-fructose + NADH + H(+) = D-sorbitol + NAD(+). In terms of biological role, polyol dehydrogenase that catalyzes the reversible NAD(+)-dependent oxidation of various sugar alcohols. Is active with D-sorbitol (D-glucitol) as substrate, leading to the C2-oxidized product D-fructose. Is a key enzyme in the polyol pathway that interconverts glucose and fructose via sorbitol, which constitutes an important alternate route for glucose metabolism. The chain is Sorbitol dehydrogenase (SORD) from Gallus gallus (Chicken).